The sequence spans 320 residues: Probable serine proteinase inhibitor 1 (320 aa).

Belongs to the serpin family. Poxviruses subfamily.

The sequence is that of Probable serine proteinase inhibitor 1 (SPI-1) from Swinepox virus (strain Kasza) (SWPV).